The following is a 578-amino-acid chain: Membrane protein insertase YidC (578 aa).

The helical transmembrane segment at 3–23 (IQRSILIVALAVVSYLLVLQW) threads the bilayer. The tract at residues 34 to 72 (AASASMNTTQGLPDTPSASGTSSDVPTAQSSAAGSEAAD) is disordered. A compositionally biased stretch (polar residues) spans 37–66 (ASMNTTQGLPDTPSASGTSSDVPTAQSSAA). The next 5 helical transmembrane spans lie at 361 to 381 (LELT…FWLL), 387 to 407 (LIGN…LAFF), 457 to 477 (LGGC…YWVL), 500 to 520 (PFFI…MLNP), and 535 to 555 (PIIF…YWVV).

The protein belongs to the OXA1/ALB3/YidC family. Type 1 subfamily. As to quaternary structure, interacts with the Sec translocase complex via SecD. Specifically interacts with transmembrane segments of nascent integral membrane proteins during membrane integration.

It is found in the cell inner membrane. Required for the insertion and/or proper folding and/or complex formation of integral membrane proteins into the membrane. Involved in integration of membrane proteins that insert both dependently and independently of the Sec translocase complex, as well as at least some lipoproteins. Aids folding of multispanning membrane proteins. The sequence is that of Membrane protein insertase YidC from Pseudomonas aeruginosa (strain LESB58).